The chain runs to 280 residues: Lysosome-associated membrane glycoprotein 5 (280 aa).

An N-terminal signal peptide occupies residues 1 to 29; that stretch reads MDLRVRTLLGGDRLRILLMFFHVMVQTVA. Over 30-235 the chain is Extracellular; that stretch reads EQEVENLSGL…PVDEQEQLEE (206 aa). 4 N-linked (GlcNAc...) asparagine glycosylation sites follow: Asn-35, Asn-53, Asn-102, and Asn-127. The helical transmembrane segment at 236-256 threads the bilayer; sequence TLPLILGLILGLVIVITLVIY. Topologically, residues 257 to 280 are cytoplasmic; that stretch reads HIHHKMTANQVQIPRDRSQYKHMG.

Belongs to the LAMP family. Post-translationally, glycosylated. As to expression, in brain, strongly expressed in the globus pallidus/ventral pallidum complex, the substantia nigra pars reticulata and the entopeduncular nucleus (at protein level). Expressed in the external plexiform layer of the olfactory bulb (at protein level). May be weakly expressed in neocortex and striatum (at protein level). Highly expressed in brain; not detected in other tissues tested. Detected in the cingulate cortex, cortical plate and caudate putamen. In neocortex, specifically expressed in neurons of layers II/III and V.

It is found in the cytoplasmic vesicle membrane. The protein resides in the cell membrane. Its subcellular location is the cell projection. It localises to the dendrite. The protein localises to the cytoplasmic vesicle. It is found in the secretory vesicle. The protein resides in the synaptic vesicle membrane. Its subcellular location is the growth cone membrane. It localises to the early endosome membrane. The protein localises to the recycling endosome. It is found in the endoplasmic reticulum-Golgi intermediate compartment membrane. The protein resides in the endosome membrane. In terms of biological role, plays a role in short-term synaptic plasticity in a subset of GABAergic neurons in the brain. The sequence is that of Lysosome-associated membrane glycoprotein 5 (Lamp5) from Mus musculus (Mouse).